The following is a 514-amino-acid chain: Threonine synthase (514 aa).

Lysine 124 bears the N6-(pyridoxal phosphate)lysine mark. Pyridoxal 5'-phosphate is bound by residues glycine 277, asparagine 278, phenylalanine 279, aspartate 281, and threonine 449. Residue serine 467 is modified to Phosphoserine.

It belongs to the threonine synthase family. Pyridoxal 5'-phosphate serves as cofactor.

It carries out the reaction O-phospho-L-homoserine + H2O = L-threonine + phosphate. The protein operates within amino-acid biosynthesis; L-threonine biosynthesis; L-threonine from L-aspartate: step 5/5. Functionally, catalyzes the gamma-elimination of phosphate from L-phosphohomoserine and the beta-addition of water to produce L-threonine. The sequence is that of Threonine synthase (THR4) from Saccharomyces cerevisiae (strain ATCC 204508 / S288c) (Baker's yeast).